The primary structure comprises 382 residues: Alkanesulfonate monooxygenase (382 aa).

This sequence belongs to the SsuD family.

It carries out the reaction an alkanesulfonate + FMNH2 + O2 = an aldehyde + FMN + sulfite + H2O + 2 H(+). Catalyzes the desulfonation of aliphatic sulfonates. The chain is Alkanesulfonate monooxygenase from Pseudomonas putida (strain ATCC 700007 / DSM 6899 / JCM 31910 / BCRC 17059 / LMG 24140 / F1).